The chain runs to 392 residues: Elongation factor Tu (392 aa).

The tr-type G domain maps to 10-202; that stretch reads KVHVNVGTIG…VLDEYIEDPI (193 aa). The segment at 19–26 is G1; that stretch reads GHVDHGKT. GTP is bound at residue 19-26; it reads GHVDHGKT. Thr26 contacts Mg(2+). Residues 60-64 are G2; it reads GITIN. Positions 81–84 are G3; that stretch reads DCPG. Residues 81–85 and 136–139 contribute to the GTP site; these read DCPGH and NKCD. The tract at residues 136–139 is G4; sequence NKCD. The G5 stretch occupies residues 174-176; the sequence is SAL.

This sequence belongs to the TRAFAC class translation factor GTPase superfamily. Classic translation factor GTPase family. EF-Tu/EF-1A subfamily. As to quaternary structure, monomer.

The protein resides in the cytoplasm. It catalyses the reaction GTP + H2O = GDP + phosphate + H(+). Its function is as follows. GTP hydrolase that promotes the GTP-dependent binding of aminoacyl-tRNA to the A-site of ribosomes during protein biosynthesis. The protein is Elongation factor Tu of Apple proliferation phytoplasma.